The primary structure comprises 232 residues: Rho-related GTP-binding protein Rho6 (232 aa).

Residues 23–28 (QCGKTA), 38–45 (YPETYVPT), 67–71 (DTSGS), 125–128 (CKTD), and 169–170 (AF) contribute to the GTP site. Residues 42–50 (YVPTVFENY) carry the Effector region motif. At Cys229 the chain carries Cysteine methyl ester. Cys229 carries the S-geranylgeranyl cysteine lipid modification. Residues 230–232 (SIM) constitute a propeptide, removed in mature form.

It belongs to the small GTPase superfamily. Rho family. In terms of assembly, binds GRB7 and PLXNB1. Interacts with PLXNA2. Interacts with UBXD5.

It is found in the cell membrane. The protein resides in the cytoplasm. Its subcellular location is the cytoskeleton. Functionally, lacks intrinsic GTPase activity. Has a low affinity for GDP, and constitutively binds GTP. Controls rearrangements of the actin cytoskeleton. Induces the Rac-dependent neuritic process formation in part by disruption of the cortical actin filaments. Causes the formation of many neuritic processes from the cell body with disruption of the cortical actin filaments. The sequence is that of Rho-related GTP-binding protein Rho6 (Rnd1) from Mus musculus (Mouse).